The following is a 336-amino-acid chain: Methionine synthase (336 aa).

Residues His210, Cys212, Glu234, and Cys294 each contribute to the Zn(2+) site.

This sequence belongs to the archaeal MetE family. Zn(2+) serves as cofactor.

The protein operates within amino-acid biosynthesis; L-methionine biosynthesis via de novo pathway. Functionally, catalyzes the transfer of a methyl group to L-homocysteine resulting in methionine formation. The physiological methyl donor is unknown. The chain is Methionine synthase from Thermococcus kodakarensis (strain ATCC BAA-918 / JCM 12380 / KOD1) (Pyrococcus kodakaraensis (strain KOD1)).